The chain runs to 469 residues: Regulator of G-protein signaling 7 (469 aa).

The 76-residue stretch at Glu37–Thr112 folds into the DEP domain. Ser229 and Ser241 each carry phosphoserine. The segment at Asp236–Glu255 is disordered. Position 243 is a phosphothreonine (Thr243). In terms of domain architecture, G protein gamma spans Glu255–Leu316. Positions Gly333–Leu448 constitute an RGS domain. Ser434 carries the phosphoserine modification.

In terms of assembly, interacts with GNB5, forming the RGS7-GNB5 complex. Interacts with GPR158; promotes the GTPase activator activity of the RGS7-GNB5 complex in absence of glycine, in contrast GTPase activator activity of the RGS7-GNB5 complex is inhibited in presence of glycine. Interacts with GPR179. Interacts with PKD1; this prevents rapid proteasomal degradation. Interacts with RGS7BP, leading to regulate the subcellular location of the heterodimer formed with GNB5. Interacts (phosphorylated form) with 14-3-3 protein YWHAQ. Interacts with SNAPIN. Interacts with GNAI1. Interacts with GNAO1, GNAI3 and GNAZ. Post-translationally, palmitoylated. Ubiquitinated, leading to rapid proteasomal degradation. In terms of processing, phosphorylation and subsequent interaction with 14-3-3 proteins inhibits GAP activity. In terms of tissue distribution, detected in brain (at protein level).

The protein localises to the cytoplasm. It localises to the cytosol. The protein resides in the cell membrane. Its subcellular location is the membrane. GTPase activator component of the RGS7-GNB5 complex that regulates G protein-coupled receptor signaling cascades. The RGS7-GNB5 complex acts as an inhibitor signal transduction by promoting the GTPase activity of G protein alpha subunits, such as GNAO1, thereby driving them into their inactive GDP-bound form. May play a role in synaptic vesicle exocytosis. Glycine-dependent regulation of the RGS7-GNB5 complex by GPR158 affects mood and cognition via its ability to regulate neuronal excitability in L2/L3 pyramidal neurons of the prefrontal cortex. Modulates the activity of potassium channels that are activated by GNAO1 in response to muscarinic acetylcholine receptor M2/CHRM2 signaling. This is Regulator of G-protein signaling 7 (Rgs7) from Mus musculus (Mouse).